The sequence spans 620 residues: Proline--tRNA ligase (620 aa).

The protein belongs to the class-II aminoacyl-tRNA synthetase family. ProS type 1 subfamily. As to quaternary structure, homodimer.

Its subcellular location is the cytoplasm. The enzyme catalyses tRNA(Pro) + L-proline + ATP = L-prolyl-tRNA(Pro) + AMP + diphosphate. Catalyzes the attachment of proline to tRNA(Pro) in a two-step reaction: proline is first activated by ATP to form Pro-AMP and then transferred to the acceptor end of tRNA(Pro). As ProRS can inadvertently accommodate and process non-cognate amino acids such as alanine and cysteine, to avoid such errors it has two additional distinct editing activities against alanine. One activity is designated as 'pretransfer' editing and involves the tRNA(Pro)-independent hydrolysis of activated Ala-AMP. The other activity is designated 'posttransfer' editing and involves deacylation of mischarged Ala-tRNA(Pro). The misacylated Cys-tRNA(Pro) is not edited by ProRS. The polypeptide is Proline--tRNA ligase (Streptococcus thermophilus (strain ATCC BAA-491 / LMD-9)).